We begin with the raw amino-acid sequence, 150 residues long: uncharacterized protein (150 aa).

Positions 5-66 (LDKVDRRLLE…KPNYKKLNLG (62 aa)) constitute an HTH asnC-type domain. Positions 24-43 (IATLSKKLGIPRTTVHYRIK) form a DNA-binding region, H-T-H motif.

This is an uncharacterized protein from Pyrococcus abyssi (strain GE5 / Orsay).